The primary structure comprises 288 residues: Pantothenate synthetase (288 aa).

30 to 37 provides a ligand contact to ATP; sequence MGNLHEGH. The active-site Proton donor is His37. Residue Gln61 participates in (R)-pantoate binding. Gln61 lines the beta-alanine pocket. 148–151 is an ATP binding site; it reads GQKD. A (R)-pantoate-binding site is contributed by Gln154. Residues Val177 and 185–188 contribute to the ATP site; that span reads LSSR.

This sequence belongs to the pantothenate synthetase family. Homodimer.

The protein resides in the cytoplasm. It carries out the reaction (R)-pantoate + beta-alanine + ATP = (R)-pantothenate + AMP + diphosphate + H(+). The protein operates within cofactor biosynthesis; (R)-pantothenate biosynthesis; (R)-pantothenate from (R)-pantoate and beta-alanine: step 1/1. Catalyzes the condensation of pantoate with beta-alanine in an ATP-dependent reaction via a pantoyl-adenylate intermediate. In Psychrobacter arcticus (strain DSM 17307 / VKM B-2377 / 273-4), this protein is Pantothenate synthetase.